The following is a 360-amino-acid chain: Dehydrogenase mokE (360 aa).

Residue 50-53 (SDTK) coordinates NADP(+). 134 to 141 (AGISTAGL) lines the substrate pocket. Residues 173–176 (STAT), 196–199 (SPHN), tyrosine 214, 261–262 (LN), and threonine 279 each bind NADP(+). 281 to 285 (GPTIF) serves as a coordination point for substrate. 350–351 (LS) is an NADP(+) binding site.

The protein belongs to the zinc-containing alcohol dehydrogenase family. As to quaternary structure, monomer.

It functions in the pathway polyketide biosynthesis; lovastatin biosynthesis. In terms of biological role, dehydrogenase; part of the gene cluster that mediates the biosynthesis of monakolin K, also known as lovastatin, and which acts as a potent competitive inhibitor of HMG-CoA reductase. Monakolin K biosynthesis is performed in two stages. The first stage is catalyzed by the nonaketide synthase mokA, which belongs to type I polyketide synthases and catalyzes the iterative nine-step formation of the polyketide. This PKS stage is completed by the action of dehydrogenase mokE, which catalyzes the NADPH-dependent reduction of the unsaturated tetra-, penta- and heptaketide intermediates that arise during the mokA-mediated biosynthesis of the nonaketide chain and leads to dihydromonacolin L. Covalently bound dihydromonacolin L is released from mokA by the mokD esterase. Conversion of dihydromonacolin L into monacolin L and then monacolin J is subsequently performed with the participation of molecular oxygen and P450 monoogygenase mokC. Finally, mokF performs the conversion of monacoline J to monacoline K through the addition of the side-chain diketide moiety (2R)-2-methylbutanoate produced by the diketide synthase mokB. The sequence is that of Dehydrogenase mokE from Monascus pilosus (Red mold).